We begin with the raw amino-acid sequence, 208 residues long: Predicted GPI-anchored protein 37 (208 aa).

Residues 1-18 form the signal peptide; it reads MLFTQLIILLTVTSQALS. Residues 33-93 form a disordered region; it reads TKRLGGGSRG…SSSSSGSRNW (61 aa). Positions 36-53 are enriched in gly residues; that stretch reads LGGGSRGGSSSGSRGGSS. Residues 54–63 are compositionally biased toward low complexity; it reads SGSSSGSSSG. Residue Asn-173 is glycosylated (N-linked (GlcNAc...) asparagine). The GPI-anchor amidated serine moiety is linked to residue Ser-185. Positions 186 to 208 are cleaved as a propeptide — removed in mature form; sequence SSLNIPSTHFYLIGFAAAYSIVL.

This sequence belongs to the PGA37 family.

It is found in the cell membrane. In terms of biological role, predicted GPI-anchored protein which may have a role during host infection. In Candida albicans (strain SC5314 / ATCC MYA-2876) (Yeast), this protein is Predicted GPI-anchored protein 37 (PGA37).